We begin with the raw amino-acid sequence, 158 residues long: MSEAGDTSPQPGKTGQPKAGDRRRARALAMQGLYQRHFSKTPISDIEAEFMVDNDMSKVDIMYFRDLLRGVHREQAELDKLLEPFLDRPLKEVDPVELAIVRLGAYELKHRIDVPYKVVINEGIEMAKRFGGTEGHKFVNSILDKLSRRLRLAETRPR.

Residues 1–13 show a composition bias toward polar residues; it reads MSEAGDTSPQPGK. Positions 1-24 are disordered; that stretch reads MSEAGDTSPQPGKTGQPKAGDRRR.

Belongs to the NusB family.

Its function is as follows. Involved in transcription antitermination. Required for transcription of ribosomal RNA (rRNA) genes. Binds specifically to the boxA antiterminator sequence of the ribosomal RNA (rrn) operons. In Marinobacter nauticus (strain ATCC 700491 / DSM 11845 / VT8) (Marinobacter aquaeolei), this protein is Transcription antitermination protein NusB.